Reading from the N-terminus, the 59-residue chain is MTRGNQRELARQKNMKKQSDSVKGKRRDDGLSAAARKQRDSEIMQQKQKKANEKKEEPK.

Composition is skewed to basic and acidic residues over residues 1-30 and 50-59; these read MTRG…RDDG and KANEKKEEPK. Positions 1–59 are disordered; the sequence is MTRGNQRELARQKNMKKQSDSVKGKRRDDGLSAAARKQRDSEIMQQKQKKANEKKEEPK.

This sequence belongs to the SERF family.

In terms of biological role, positive regulator of amyloid protein aggregation and proteotoxicity. Induces conformational changes in amyloid proteins, such as HTT, driving them into compact formations preceding the formation of aggregates. This is Small EDRK-rich factor 2 (SERF2) from Plecturocebus moloch (Dusky titi monkey).